The chain runs to 430 residues: NAD(P)(+) glycohydrolase toxin Tse6 (430 aa).

3 helical membrane passes run 17–37 (FGVAAMVAGAVAGALIGAAVV), 46–66 (LAAVILAGSIAAGGLSMFQIV), and 193–213 (LLLAAMAGVAALVGVVAIGGL).

In terms of assembly, interacts with Tsi6, VgrG1a, EagT6 and EF-Tu.

It is found in the membrane. It carries out the reaction NAD(+) + H2O = ADP-D-ribose + nicotinamide + H(+). Type VI secretion exported toxin that acts as a glycohydrolase on bacterial target cells and degrades the essential dinucleotides NAD(+) and NADP(+), thereby inducing bacteriostasis. The activity resides in the C-terminal region that is initially neutralized by the cognate immunity protein Tsi6. The protein is NAD(P)(+) glycohydrolase toxin Tse6 of Pseudomonas aeruginosa (strain ATCC 15692 / DSM 22644 / CIP 104116 / JCM 14847 / LMG 12228 / 1C / PRS 101 / PAO1).